The chain runs to 737 residues: Phosphoribosylformylglycinamidine synthase subunit PurL (737 aa).

Histidine 50 is a catalytic residue. Residues tyrosine 53 and lysine 92 each contribute to the ATP site. Glutamate 94 is a binding site for Mg(2+). Residues serine 95–histidine 98 and arginine 117 contribute to the substrate site. The Proton acceptor role is filled by histidine 96. Aspartate 118 provides a ligand contact to Mg(2+). Glutamine 241 contributes to the substrate binding site. Aspartate 269 lines the Mg(2+) pocket. Residue glutamate 313–glutamine 315 coordinates substrate. Residues aspartate 495 and glycine 532 each coordinate ATP. Asparagine 533 serves as a coordination point for Mg(2+). Serine 535 is a binding site for substrate.

The protein belongs to the FGAMS family. Monomer. Part of the FGAM synthase complex composed of 1 PurL, 1 PurQ and 2 PurS subunits.

Its subcellular location is the cytoplasm. It carries out the reaction N(2)-formyl-N(1)-(5-phospho-beta-D-ribosyl)glycinamide + L-glutamine + ATP + H2O = 2-formamido-N(1)-(5-O-phospho-beta-D-ribosyl)acetamidine + L-glutamate + ADP + phosphate + H(+). The protein operates within purine metabolism; IMP biosynthesis via de novo pathway; 5-amino-1-(5-phospho-D-ribosyl)imidazole from N(2)-formyl-N(1)-(5-phospho-D-ribosyl)glycinamide: step 1/2. Its function is as follows. Part of the phosphoribosylformylglycinamidine synthase complex involved in the purines biosynthetic pathway. Catalyzes the ATP-dependent conversion of formylglycinamide ribonucleotide (FGAR) and glutamine to yield formylglycinamidine ribonucleotide (FGAM) and glutamate. The FGAM synthase complex is composed of three subunits. PurQ produces an ammonia molecule by converting glutamine to glutamate. PurL transfers the ammonia molecule to FGAR to form FGAM in an ATP-dependent manner. PurS interacts with PurQ and PurL and is thought to assist in the transfer of the ammonia molecule from PurQ to PurL. In Bartonella bacilliformis (strain ATCC 35685 / KC583 / Herrer 020/F12,63), this protein is Phosphoribosylformylglycinamidine synthase subunit PurL.